The following is a 601-amino-acid chain: MEGSDLLTAGVMFLFAAVAAVPLASRLGIGAVLGYLLAGIAIGPWGLGFISDVDEILHFSELGVVFLMFIIGLELNPSKLWQLRRSIFGVGAAQVMLSAVVLAGLLMLTDFSWQAAVIGGIGLAMSSTAMALQLMREKGMNRSESGQLGFSVLLFQDLAVIPALALVPLLAGSADEHFDWIKVGMKVLAFAGMLIGGRYLLRPVFRFIADSGVREVFTAATLLLVLGSALFMDALGLSMALGTFIAGVLLAESEYRHELETAIDPFKGLLLGLFFISVGMSLNLGVLYTHLLWVAVSVIVLVAVKTLVLYLLARLYGIRSSERMQFAGVLSQGGEFAFVLFSTASSQRLFQGDQMSLLLVTVTLSMMTTPLLMKLVDKWLSRQLNGPEEEDEKPWVDDDKPQVIVVGFGRFGQVIGRLLMANKMRITVLERDISAVNLMRKYGYKVYYGDATQVELLRSAGAEAAESIVITCNEPEDTMKLVEICRQHFPHLHILARARGRVEAHELLQAGVTQFSRETFSSALELGRKTLVSLGMHPHQAQRAQLHFRRLDMRMLRELIPMHTDMVQISRAREARRELEEIFQREMQQERRQLDGWDEFE.

13 helical membrane-spanning segments follow: residues 4-24 (SDLL…VPLA), 29-49 (IGAV…GLGF), 55-75 (EILH…GLEL), 87-107 (IFGV…GLLM), 115-135 (AAVI…LQLM), 152-172 (VLLF…LLAG), 177-197 (HFDW…LIGG), 207-227 (FIAD…LVLG), 230-250 (LFMD…GVLL), 262-282 (AIDP…GMSL), 284-304 (LGVL…LVAV), 324-344 (MQFA…FSTA), and 356-376 (SLLL…MKLV). Positions 400–519 (KPQVIVVGFG…AGVTQFSRET (120 aa)) constitute an RCK N-terminal domain.

This sequence belongs to the monovalent cation:proton antiporter 2 (CPA2) transporter (TC 2.A.37) family. KefB subfamily. As to quaternary structure, interacts with the regulatory subunit KefG.

The protein resides in the cell inner membrane. In terms of biological role, pore-forming subunit of a potassium efflux system that confers protection against electrophiles. Catalyzes K(+)/H(+) antiport. This is Glutathione-regulated potassium-efflux system protein KefB from Citrobacter koseri (strain ATCC BAA-895 / CDC 4225-83 / SGSC4696).